Reading from the N-terminus, the 325-residue chain is MARGGRLGLALGLLLALVLALRAKPTVRKERVVRPDSELGERPPEDNQSFQYDHEAFLGKEDSKTFDQLSPDESKERLGKIVDRIDSDGDGLVTTEELKLWIKRVQKRYIYDNVAKVWKDYDRDKDEKISWEEYKQATYGYYLGNPAEFHDSSDHHTFKKMLPRDERRFKASDLDGDLTATREEFTAFLHPEEFEHMKEIVVLETLEDIDKNGDGFVDQDEYIADMFSHEDNGPEPDWVLSEREQFNDFRDLNKDGKLDKDEIRHWILPQDYDHAQAEARHLVYESDKNKDEMLTKEEILDNWNMFVGSQATNYGEDLTKNHDEL.

Residues 1-23 (MARGGRLGLALGLLLALVLALRA) form the signal peptide. Asn-47 carries N-linked (GlcNAc...) asparagine; partial glycosylation. Phosphoserine is present on residues Ser-49 and Ser-74. EF-hand domains lie at 73–108 (ESKE…VQKR), 109–144 (YIYD…YYLG), 160–195 (KMLP…EEFE), 197–232 (MKEI…HEDN), 238–273 (WVLS…QDYD), and 274–309 (HAQA…FVGS). Positions 86, 88, 90, 97, 122, 124, 126, 128, 133, 173, 175, 177, 179, 184, 210, 212, 214, 221, 251, 253, 255, 257, 262, 287, 289, 291, 293, and 298 each coordinate Ca(2+). The Prevents secretion from ER motif lies at 322–325 (HDEL).

This sequence belongs to the CREC family. In terms of processing, O-glycosylated. O-mannosylated by POMT1 and POMT2 and elongated by POMGNT1.

The protein localises to the endoplasmic reticulum lumen. Its function is as follows. May regulate calcium-dependent activities in the endoplasmic reticulum lumen or post-ER compartment. This is Reticulocalbin-1 (Rcn1) from Mus musculus (Mouse).